Reading from the N-terminus, the 156-residue chain is Ribonuclease P protein component (156 aa).

The segment at 126 to 156 (GLRKLGVTPGGGRSPAPRAHSGARPRTDARS) is disordered.

Belongs to the RnpA family. Consists of a catalytic RNA component (M1 or rnpB) and a protein subunit.

The enzyme catalyses Endonucleolytic cleavage of RNA, removing 5'-extranucleotides from tRNA precursor.. Its function is as follows. RNaseP catalyzes the removal of the 5'-leader sequence from pre-tRNA to produce the mature 5'-terminus. It can also cleave other RNA substrates such as 4.5S RNA. The protein component plays an auxiliary but essential role in vivo by binding to the 5'-leader sequence and broadening the substrate specificity of the ribozyme. The polypeptide is Ribonuclease P protein component (Nocardia farcinica (strain IFM 10152)).